The primary structure comprises 242 residues: MGIKKEDQKSSLSLLTQRWNNPRIVRVSRAFGGKDRHSKVCTVRGLRDRRIRLSVMTAIQVYDLQERLGLSQPSKVIDWLLEVAKNDVDLLPPLQFPPGFHQLNPNLTGLGESFPGVFDLGRTQREALDLEKRKWVNLDHVFDHIDHHNHFSNSIQSNKLYFPTITSSSSSYHYNLGHLQQSLLDQSGNVTVAFSNNYNNNNLNPPAAETMSSLFPTRYPSFLGGGQLQLFSSTSSQPDHIE.

Positions 33–91 (GKDRHSKVCTVRGLRDRRIRLSVMTAIQVYDLQERLGLSQPSKVIDWLLEVAKNDVDLL) constitute a TCP domain.

Interacts with SPL. As to expression, expressed in cotyledons, particularly in the vascular region, in leaves, roots, stems, buds, flowers and siliques.

The protein localises to the nucleus. Its function is as follows. Plays a pivotal role in the control of morphogenesis of shoot organs by negatively regulating the expression of boundary-specific genes such as CUC genes, probably through the induction of miRNA (e.g. miR164). Participates in ovule development. In Arabidopsis thaliana (Mouse-ear cress), this protein is Transcription factor TCP17 (TCP17).